The chain runs to 449 residues: N-succinylarginine dihydrolase (449 aa).

Substrate is bound by residues 19 to 28 (GGLSYGNVAS), Asn-110, and 137 to 138 (HR). The tract at residues 23–43 (YGNVASQSNSQQASNPREAAR) is disordered. Over residues 27–37 (ASQSNSQQASN) the composition is skewed to low complexity. Glu-174 is an active-site residue. Position 214 (Arg-214) interacts with substrate. Residue His-250 is part of the active site. Residues Asp-252 and Asn-365 each contribute to the substrate site. The active-site Nucleophile is the Cys-371.

The protein belongs to the succinylarginine dihydrolase family. Homodimer.

The catalysed reaction is N(2)-succinyl-L-arginine + 2 H2O + 2 H(+) = N(2)-succinyl-L-ornithine + 2 NH4(+) + CO2. It participates in amino-acid degradation; L-arginine degradation via AST pathway; L-glutamate and succinate from L-arginine: step 2/5. Functionally, catalyzes the hydrolysis of N(2)-succinylarginine into N(2)-succinylornithine, ammonia and CO(2). This chain is N-succinylarginine dihydrolase, found in Pseudomonas putida (strain ATCC 47054 / DSM 6125 / CFBP 8728 / NCIMB 11950 / KT2440).